Here is a 264-residue protein sequence, read N- to C-terminus: MSSVLINSIAVLAGLGFAVGVMLVIASKVFKIDSNPLIDDVASLLPGANCGGCGFAGCAACAEAIVEQGAPVNSCPVGGFEVAKQIGALLGQEVTESEKEFPFVRCQGGNQHCTTLYDYHGVENCKVALMLCDSRKGCTYGCLGLGTCVQACQFGALSMGEDGFPVVNKALCTSCGNCIAACPNGVLTFARDSEKVHVLCRSHDKGKDVKAVCEVGCIGCKKCEKECPAGAIRVTEFLAEIDQEKCTACGACVAICPQKAIELR.

The helical transmembrane segment at 5–25 (LINSIAVLAGLGFAVGVMLVI) threads the bilayer. One can recognise a 4Fe-4S domain in the interval 33–92 (DSNPLIDDVASLLPGANCGGCGFAGCAACAEAIVEQGAPVNSCPVGGFEVAKQIGALLGQ). Cysteine 50, cysteine 53, cysteine 58, cysteine 75, cysteine 138, cysteine 142, cysteine 148, cysteine 152, cysteine 172, cysteine 175, cysteine 178, cysteine 182, cysteine 217, cysteine 220, cysteine 223, cysteine 227, cysteine 246, cysteine 249, cysteine 252, and cysteine 256 together coordinate [4Fe-4S] cluster. 4Fe-4S ferredoxin-type domains follow at residues 127–162 (VALMLCDSRKGCTYGCLGLGTCVQACQFGALSMGED), 163–192 (GFPVVNKALCTSCGNCIAACPNGVLTFARD), 207–236 (KDVKAVCEVGCIGCKKCEKECPAGAIRVTE), and 237–264 (FLAEIDQEKCTACGACVAICPQKAIELR).

It belongs to the 4Fe4S bacterial-type ferredoxin family. RnfB subfamily. As to quaternary structure, the Rnf complex is probably composed of eight subunits, including RnfA, RnfB, RnfC, RnfD, RnfE and RnfG. [4Fe-4S] cluster serves as cofactor.

The protein resides in the cell membrane. Functionally, part of a membrane-bound complex that couples electron transfer with translocation of ions across the membrane. Catalyzes Na(+) transport, most probably coupled to electron transfer from reduced ferredoxin to methanophenazine and heterodisulfide reductase. Involved in heterodisulfide reduction during methanogenesis from acetate. This is Ion-translocating oxidoreductase complex subunit B from Methanosarcina acetivorans (strain ATCC 35395 / DSM 2834 / JCM 12185 / C2A).